Reading from the N-terminus, the 158-residue chain is Protein-export protein SecB (158 aa).

The protein belongs to the SecB family. As to quaternary structure, homotetramer, a dimer of dimers. One homotetramer interacts with 1 SecA dimer.

It localises to the cytoplasm. Functionally, one of the proteins required for the normal export of preproteins out of the cell cytoplasm. It is a molecular chaperone that binds to a subset of precursor proteins, maintaining them in a translocation-competent state. It also specifically binds to its receptor SecA. The chain is Protein-export protein SecB from Photorhabdus laumondii subsp. laumondii (strain DSM 15139 / CIP 105565 / TT01) (Photorhabdus luminescens subsp. laumondii).